The primary structure comprises 294 residues: Nucleotide-binding protein CLB_3433 (294 aa).

8–15 (GLSGAGKT) is a binding site for ATP. Residue 59–62 (DIRG) participates in GTP binding.

It belongs to the RapZ-like family.

Its function is as follows. Displays ATPase and GTPase activities. This is Nucleotide-binding protein CLB_3433 from Clostridium botulinum (strain ATCC 19397 / Type A).